We begin with the raw amino-acid sequence, 41 residues long: Large ribosomal subunit protein bL36 (41 aa).

The protein belongs to the bacterial ribosomal protein bL36 family.

The sequence is that of Large ribosomal subunit protein bL36 from Caulobacter vibrioides (strain ATCC 19089 / CIP 103742 / CB 15) (Caulobacter crescentus).